Here is a 380-residue protein sequence, read N- to C-terminus: Erythronate-4-phosphate dehydrogenase (380 aa).

The substrate site is built by S45 and T66. NAD(+)-binding positions include 126–127 (QV), D146, T174, 205–207 (ASR), and D231. R207 is a catalytic residue. The active site involves E236. H253 serves as the catalytic Proton donor. Residue G256 participates in NAD(+) binding. A substrate-binding site is contributed by Y257.

It belongs to the D-isomer specific 2-hydroxyacid dehydrogenase family. PdxB subfamily. Homodimer.

The protein resides in the cytoplasm. The catalysed reaction is 4-phospho-D-erythronate + NAD(+) = (R)-3-hydroxy-2-oxo-4-phosphooxybutanoate + NADH + H(+). Its pathway is cofactor biosynthesis; pyridoxine 5'-phosphate biosynthesis; pyridoxine 5'-phosphate from D-erythrose 4-phosphate: step 2/5. Functionally, catalyzes the oxidation of erythronate-4-phosphate to 3-hydroxy-2-oxo-4-phosphonooxybutanoate. The protein is Erythronate-4-phosphate dehydrogenase of Pseudomonas savastanoi pv. phaseolicola (strain 1448A / Race 6) (Pseudomonas syringae pv. phaseolicola (strain 1448A / Race 6)).